The primary structure comprises 239 residues: Ribosomal RNA small subunit methyltransferase G (239 aa).

Residues G76, F81, 99-101, 128-129, and R147 each bind S-adenosyl-L-methionine; these read DSS and IE.

Belongs to the methyltransferase superfamily. RNA methyltransferase RsmG family.

Its subcellular location is the cytoplasm. In terms of biological role, specifically methylates the N7 position of a guanine in 16S rRNA. The chain is Ribosomal RNA small subunit methyltransferase G from Prochlorococcus marinus subsp. pastoris (strain CCMP1986 / NIES-2087 / MED4).